The chain runs to 145 residues: Synaptojanin-2-binding protein (145 aa).

The Cytoplasmic portion of the chain corresponds to 1–117 (MNGRVDYLVS…VHRGDGEPSG (117 aa)). Positions 13–100 (EINLTRGPSG…AVSLRVQHRL (88 aa)) constitute a PDZ domain. A helical membrane pass occupies residues 118–138 (VPVAVVLLPVFALTLVAVWAF). Residues 139 to 145 (VRYRKQL) are Mitochondrial intermembrane-facing.

In terms of assembly, binds (via the PDZ domain) to isoform 2A of SYNJ2 (via the unique motif in the C-terminus). Interacts (via C-terminus) with RALBP1. Interacts (via PDZ domain) with ACVR2A (via C-terminus) and ACVR2B (via C-terminus). Forms a ternary complex with ACVR2A and RALBP1. Interacts with MAPK12. Interacts with DLL1; enhances DLL1 protein stability, and promotes notch signaling in endothelial cells. As to expression, widely expressed.

It localises to the mitochondrion outer membrane. Functionally, regulates endocytosis of activin type 2 receptor kinases through the Ral/RALBP1-dependent pathway and may be involved in suppression of activin-induced signal transduction. The sequence is that of Synaptojanin-2-binding protein (Synj2bp) from Rattus norvegicus (Rat).